Here is a 28-residue protein sequence, read N- to C-terminus: uncharacterized protein (28 aa).

It is found in the cell inner membrane. This is an uncharacterized protein from Escherichia coli (strain K12).